A 173-amino-acid polypeptide reads, in one-letter code: MALRPARCYRTIERRSYTRKEYVRAVPQPKVVHYVMGNPSAEFPVQVQLVSKSDILIRHNALESSRIAGNKYILSECGRTGYLFNIRVYPHEILRENKMAAGAGADRISDGMRLSFGKAVGTAAKVKKGQEIITIGVNPEKFYAAKEALRRCSMKLPTACKIVVTKGKELIKD.

Belongs to the universal ribosomal protein uL16 family.

The chain is Large ribosomal subunit protein uL16 from Methanococcus maripaludis (strain DSM 14266 / JCM 13030 / NBRC 101832 / S2 / LL).